We begin with the raw amino-acid sequence, 522 residues long: Glutamate--cysteine ligase (522 aa).

It belongs to the glutamate--cysteine ligase type 1 family. Type 1 subfamily.

The catalysed reaction is L-cysteine + L-glutamate + ATP = gamma-L-glutamyl-L-cysteine + ADP + phosphate + H(+). It participates in sulfur metabolism; glutathione biosynthesis; glutathione from L-cysteine and L-glutamate: step 1/2. This Shewanella halifaxensis (strain HAW-EB4) protein is Glutamate--cysteine ligase.